The primary structure comprises 141 residues: Hemoglobin subunit alpha (141 aa).

In terms of domain architecture, Globin spans 1-141 (VLSAADKTNV…VATVLTSKYR (141 aa)). Phosphoserine is present on serine 3. Lysine 7 carries the N6-succinyllysine modification. Threonine 8 carries the post-translational modification Phosphothreonine. An N6-succinyllysine modification is found at lysine 11. Lysine 16 is modified (N6-acetyllysine; alternate). Residue lysine 16 is modified to N6-succinyllysine; alternate. Residue tyrosine 24 is modified to Phosphotyrosine. Serine 35 is subject to Phosphoserine. Lysine 40 is subject to N6-succinyllysine. Serine 49 carries the phosphoserine modification. Histidine 58 is a binding site for O2. A heme b-binding site is contributed by histidine 87. Serine 102 is subject to Phosphoserine. The residue at position 108 (threonine 108) is a Phosphothreonine. Serine 124 bears the Phosphoserine mark. 2 positions are modified to phosphothreonine: threonine 134 and threonine 137. Serine 138 carries the post-translational modification Phosphoserine.

Belongs to the globin family. In terms of assembly, heterotetramer of two alpha chains and two beta chains. In terms of tissue distribution, red blood cells.

Involved in oxygen transport from the lung to the various peripheral tissues. Its function is as follows. Hemopressin acts as an antagonist peptide of the cannabinoid receptor CNR1. Hemopressin-binding efficiently blocks cannabinoid receptor CNR1 and subsequent signaling. This is Hemoglobin subunit alpha (HBA) from Ctenodactylus gundi (Northern gundi).